The sequence spans 191 residues: Potassium-transporting ATPase KdpC subunit (191 aa).

Residues 8 to 28 (LFLFLLLLLVTGLAYPLLTTV) form a helical membrane-spanning segment.

This sequence belongs to the KdpC family. The system is composed of three essential subunits: KdpA, KdpB and KdpC.

The protein resides in the cell inner membrane. Part of the high-affinity ATP-driven potassium transport (or Kdp) system, which catalyzes the hydrolysis of ATP coupled with the electrogenic transport of potassium into the cytoplasm. This subunit acts as a catalytic chaperone that increases the ATP-binding affinity of the ATP-hydrolyzing subunit KdpB by the formation of a transient KdpB/KdpC/ATP ternary complex. The chain is Potassium-transporting ATPase KdpC subunit from Pectobacterium atrosepticum (strain SCRI 1043 / ATCC BAA-672) (Erwinia carotovora subsp. atroseptica).